The primary structure comprises 441 residues: Methylenetetrahydrofolate--tRNA-(uracil-5-)-methyltransferase TrmFO (441 aa).

11 to 16 (GGGLAG) contributes to the FAD binding site.

It belongs to the MnmG family. TrmFO subfamily. Requires FAD as cofactor.

The protein localises to the cytoplasm. The enzyme catalyses uridine(54) in tRNA + (6R)-5,10-methylene-5,6,7,8-tetrahydrofolate + NADH + H(+) = 5-methyluridine(54) in tRNA + (6S)-5,6,7,8-tetrahydrofolate + NAD(+). It carries out the reaction uridine(54) in tRNA + (6R)-5,10-methylene-5,6,7,8-tetrahydrofolate + NADPH + H(+) = 5-methyluridine(54) in tRNA + (6S)-5,6,7,8-tetrahydrofolate + NADP(+). Functionally, catalyzes the folate-dependent formation of 5-methyl-uridine at position 54 (M-5-U54) in all tRNAs. The chain is Methylenetetrahydrofolate--tRNA-(uracil-5-)-methyltransferase TrmFO from Syntrophus aciditrophicus (strain SB).